A 96-amino-acid chain; its full sequence is Small ribosomal subunit protein bS6 (96 aa).

It belongs to the bacterial ribosomal protein bS6 family.

Functionally, binds together with bS18 to 16S ribosomal RNA. This is Small ribosomal subunit protein bS6 (rpsF) from Mycobacterium bovis (strain ATCC BAA-935 / AF2122/97).